A 156-amino-acid polypeptide reads, in one-letter code: Transcription elongation factor GreA (156 aa).

The stretch at 46–73 (AEYHAAREKQSFIEGRIKELEALLSLAE) forms a coiled coil.

The protein belongs to the GreA/GreB family.

Its function is as follows. Necessary for efficient RNA polymerase transcription elongation past template-encoded arresting sites. The arresting sites in DNA have the property of trapping a certain fraction of elongating RNA polymerases that pass through, resulting in locked ternary complexes. Cleavage of the nascent transcript by cleavage factors such as GreA or GreB allows the resumption of elongation from the new 3'terminus. GreA releases sequences of 2 to 3 nucleotides. The polypeptide is Transcription elongation factor GreA (Cereibacter sphaeroides (strain ATCC 17025 / ATH 2.4.3) (Rhodobacter sphaeroides)).